The sequence spans 832 residues: Prickle-like protein 1 (832 aa).

Residues 14–122 (FGCQRSSTSD…TIKLLSRAVM (109 aa)) enclose the PET domain. LIM zinc-binding domains are found at residues 124–188 (AVCE…ELLK), 189–249 (PRCS…LYAE), and 250–313 (YCET…EDIH). Residues 314–342 (ASDSSDSAFQSARSRDSRRSVRMGRSSRS) form a disordered region. 3 positions are modified to phosphoserine: Ser-315, Ser-592, and Ser-595. Disordered regions lie at residues 663–688 (HFEERGSRPHHHRHRRSRKSRSDNAL) and 765–832 (SSST…CIIS). A compositionally biased stretch (basic residues) spans 670-681 (RPHHHRHRRSRK). Position 684 is a phosphoserine (Ser-684). Residues 798–815 (DLSSPASALPTPQFTQRT) are compositionally biased toward polar residues. The span at 816-832 (TKSKKKKGHKGKNCIIS) shows a compositional bias: basic residues. Cys-829 is subject to Cysteine methyl ester. Cys-829 carries S-farnesyl cysteine lipidation. Positions 830–832 (IIS) are cleaved as a propeptide — removed in mature form.

This sequence belongs to the prickle / espinas / testin family. As to quaternary structure, interacts with REST.

The protein resides in the nucleus membrane. Its subcellular location is the cytoplasm. It localises to the cytosol. In terms of biological role, involved in the planar cell polarity pathway that controls convergent extension during gastrulation and neural tube closure. Convergent extension is a complex morphogenetic process during which cells elongate, move mediolaterally, and intercalate between neighboring cells, leading to convergence toward the mediolateral axis and extension along the anteroposterior axis. Necessary for nuclear localization of REST. May serve as nuclear receptor. The chain is Prickle-like protein 1 (Prickle1) from Mus musculus (Mouse).